A 92-amino-acid polypeptide reads, in one-letter code: C-C motif chemokine 4 (92 aa).

A signal peptide spans 1–23 (MKLCVTVLSLLMLVAAFCSPALS). 2 cysteine pairs are disulfide-bonded: Cys-34/Cys-58 and Cys-35/Cys-74.

It belongs to the intercrine beta (chemokine CC) family. Homodimer and heterodimer of MIP-1-alpha(4-69) and MIP-1-beta(3-69). In terms of processing, N-terminal processed form MIP-1-beta(3-69) is produced by proteolytic cleavage after secretion from peripheral blood lymphocytes.

The protein localises to the secreted. In terms of biological role, monokine with inflammatory and chemokinetic properties. Binds to CCR5. One of the major HIV-suppressive factors produced by CD8+ T-cells. Recombinant MIP-1-beta induces a dose-dependent inhibition of different strains of HIV-1, HIV-2, and simian immunodeficiency virus (SIV). The processed form MIP-1-beta(3-69) retains the abilities to induce down-modulation of surface expression of the chemokine receptor CCR5 and to inhibit the CCR5-mediated entry of HIV-1 in T-cells. MIP-1-beta(3-69) is also a ligand for CCR1 and CCR2 isoform B. The chain is C-C motif chemokine 4 (CCL4) from Homo sapiens (Human).